The chain runs to 410 residues: Sprouty-related, EVH1 domain-containing protein 2 (410 aa).

The WH1 domain maps to 5 to 122; that stretch reads THPDDDSYIV…RGVRKAIEDL (118 aa). Residues 127–171 are disordered; sequence TTSSSTLHNEAELGDDDVFTTATDSSSNSSQKREPTTRTISSPTS. A compositionally biased stretch (polar residues) spans 146–156; that stretch reads TTATDSSSNSS. Positions 197-252 constitute a KBD domain; it reads SYPQVTFPEDDEEIVRINPREKIWMTGYEDYRHAPVRGKYLDTTEDADSYVRFAKG. Tyr-224 and Tyr-227 each carry phosphotyrosine. A disordered region spans residues 274–294; that stretch reads DPKGSVIKTQPPRAKSRRRKE. In terms of domain architecture, SPR spans 300-408; it reads RCVYCRDMFN…CRCCGGKHKA (109 aa).

In terms of assembly, homodimer and heterodimer. Able to interact with SPRED1 to form heterodimers. Interacts with RAS. May interact with ZDHHC13 (via ANK repeats) and ZDHHC17 (via ANK repeats). Interacts with TESK1. Interacts with NF1. Post-translationally, phosphorylated on serine and threonine residues. Phosphorylated on tyrosine. Phosphorylation of Tyr-224 and Tyr-227 are required for ubiquitination. Ubiquitinated; leading to degradation by the proteasome. In terms of tissue distribution, predominantly expressed in lung, liver and testis. In testis, it is specially found in mature spermatids projecting into the lumen of the seminiferous. Strongly expressed in glandular epithelia. Also expressed in embryonic tissues such as heart, lung, liver and brain.

The protein localises to the cell membrane. It localises to the cytoplasmic vesicle. The protein resides in the secretory vesicle membrane. It is found in the cytoplasm. Negatively regulates Ras signaling pathways and downstream activation of MAP kinases. Recruits and translocates NF1 to the cell membrane, thereby enabling NF1-dependent hydrolysis of active GTP-bound Ras to inactive GDP-bound Ras. Inhibits fibroblast growth factor (FGF)-induced retinal lens fiber differentiation, probably by inhibiting FGF-mediated phosphorylation of ERK1/2. Inhibits TGFB-induced epithelial-to-mesenchymal transition in lens epithelial cells. The protein is Sprouty-related, EVH1 domain-containing protein 2 (Spred2) of Mus musculus (Mouse).